The following is a 130-amino-acid chain: Ribosome-binding factor A (130 aa).

This sequence belongs to the RbfA family. As to quaternary structure, monomer. Binds 30S ribosomal subunits, but not 50S ribosomal subunits or 70S ribosomes.

It localises to the cytoplasm. One of several proteins that assist in the late maturation steps of the functional core of the 30S ribosomal subunit. Associates with free 30S ribosomal subunits (but not with 30S subunits that are part of 70S ribosomes or polysomes). Required for efficient processing of 16S rRNA. May interact with the 5'-terminal helix region of 16S rRNA. The polypeptide is Ribosome-binding factor A (Alkalilimnicola ehrlichii (strain ATCC BAA-1101 / DSM 17681 / MLHE-1)).